We begin with the raw amino-acid sequence, 56 residues long: Large ribosomal subunit protein bL32 (56 aa).

The interval 1-36 is disordered; it reads MAVQQNKKSRSKRGMRRSHDALSTAQLSVDATSGEV. A compositionally biased stretch (basic residues) spans 7–16; the sequence is KKSRSKRGMR. Over residues 21-31 the composition is skewed to polar residues; the sequence is ALSTAQLSVDA.

This sequence belongs to the bacterial ribosomal protein bL32 family.

This is Large ribosomal subunit protein bL32 from Shewanella oneidensis (strain ATCC 700550 / JCM 31522 / CIP 106686 / LMG 19005 / NCIMB 14063 / MR-1).